The following is a 307-amino-acid chain: Agmatinase (307 aa).

Mn(2+) is bound by residues His126, Asp149, His151, Asp153, Asp230, and Asp232.

The protein belongs to the arginase family. Agmatinase subfamily. Requires Mn(2+) as cofactor.

It catalyses the reaction agmatine + H2O = urea + putrescine. It participates in amine and polyamine biosynthesis; putrescine biosynthesis via agmatine pathway; putrescine from agmatine: step 1/1. In terms of biological role, catalyzes the formation of putrescine from agmatine. The chain is Agmatinase from Sodalis glossinidius (strain morsitans).